The sequence spans 501 residues: MSKIVKRKEKKANDELTSLAEKIRAKALENQKKLIEAEKEGGSESDSEEDATAEKKKVLKSKSKSTVSTQNENTNEDESFESFSELNLVPELIQACKNLNYSKPTPIQSKAIPPALEGHDIIGLAQTGSGKTAAFAIPILNRLWHDQEPYYACILAPTRELAQQIKETFDSLGSLMGVRSTCIVGGMNMMDQARDLMRKPHIIIATPGRLMDHLENTKGFSLRKLKFLVMDEADRLLDMEFGPVLDRILKIIPTQERTTYLFSATMTSKIDKLQRASLTNPVKCAVSNKYQTVDTLVQTLMVVPGGLKNTYLIYLLNEFIGKTMIIFTRTKANAERLSGLCNLLEFSATALHGDLNQNQRMGSLDLFKAGKRSILVATDVAARGLDIPSVDIVVNYDIPVDSKSYIHRVGRTARAGRSGKSISLVSQYDLELILRIEEVLGKKLPKESVDKNIILTLRDSVDKANGEVVMEMNRRNKEKIARGKGRRGRMMTRENMDMGER.

The stretch at 3 to 44 (KIVKRKEKKANDELTSLAEKIRAKALENQKKLIEAEKEGGSE) forms a coiled coil. The tract at residues 36 to 79 (EAEKEGGSESDSEEDATAEKKKVLKSKSKSTVSTQNENTNEDES) is disordered. Residues Ser-43, Ser-45, and Ser-47 each carry the phosphoserine modification. Positions 81-109 (ESFSELNLVPELIQACKNLNYSKPTPIQS) match the Q motif motif. Residues 112–284 (IPPALEGHDI…RASLTNPVKC (173 aa)) enclose the Helicase ATP-binding domain. Residue 125 to 132 (AQTGSGKT) coordinates ATP. The DEAD box signature appears at 231–234 (DEAD). The region spanning 307 to 461 (LKNTYLIYLL…NIILTLRDSV (155 aa)) is the Helicase C-terminal domain. The disordered stretch occupies residues 480-501 (IARGKGRRGRMMTRENMDMGER). The span at 491–501 (MTRENMDMGER) shows a compositional bias: basic and acidic residues.

It belongs to the DEAD box helicase family. DDX47/RRP3 subfamily. As to quaternary structure, interacts with the SSU processome.

Its subcellular location is the nucleus. The enzyme catalyses ATP + H2O = ADP + phosphate + H(+). Its activity is regulated as follows. ATPase activity is stimulated upon the addition of RNA. Functionally, ATP-dependent rRNA helicase required for pre-ribosomal RNA processing. Involved in the maturation of the 35S-pre-rRNA and to its cleavage to mature 18S rRNA. This is ATP-dependent rRNA helicase RRP3 from Saccharomyces cerevisiae (strain ATCC 204508 / S288c) (Baker's yeast).